The sequence spans 313 residues: tRNA dimethylallyltransferase (313 aa).

Position 13-20 (13-20 (GPTASGKT)) interacts with ATP. A substrate-binding site is contributed by 15–20 (TASGKT). 4 interaction with substrate tRNA regions span residues 38-41 (DSAL), 162-166 (QRLSR), 243-248 (RCVGYR), and 276-283 (KRQITWLR).

Belongs to the IPP transferase family. As to quaternary structure, monomer. Requires Mg(2+) as cofactor.

The enzyme catalyses adenosine(37) in tRNA + dimethylallyl diphosphate = N(6)-dimethylallyladenosine(37) in tRNA + diphosphate. Catalyzes the transfer of a dimethylallyl group onto the adenine at position 37 in tRNAs that read codons beginning with uridine, leading to the formation of N6-(dimethylallyl)adenosine (i(6)A). In Aliivibrio salmonicida (strain LFI1238) (Vibrio salmonicida (strain LFI1238)), this protein is tRNA dimethylallyltransferase.